The sequence spans 872 residues: Chaperone protein ClpB 2 (872 aa).

The region spanning 6–148 is the Clp R domain; it reads PNQFTEKAWE…KNIIKQVRGS (143 aa). Repeat stretches follow at residues 9–73 and 85–148; these read FTEK…IQRQ and LGRS…VRGS. The tract at residues 161–342 is NBD1; it reads QSLEKYGRDL…RRFQQVYVDQ (182 aa). 208 to 215 is an ATP binding site; that stretch reads GEPGVGKT. Residues 343 to 551 form a linker region; the sequence is PSVEDTISIL…IAEIISKWTG (209 aa). Residues 393–527 adopt a coiled-coil conformation; sequence IDLVDEAAAR…TERELSQTQG (135 aa). Residues 561 to 772 form an NBD2 region; sequence EKEKLLHLED…RIDEVIIFHS (212 aa). 611–618 is an ATP binding site; that stretch reads GPTGVGKT. Residues 773 to 872 are C-terminal; it reads LDKKELRQIV…SRLPVEVFSS (100 aa).

The protein belongs to the ClpA/ClpB family. Homohexamer. The oligomerization is ATP-dependent.

Its subcellular location is the cytoplasm. Part of a stress-induced multi-chaperone system, it is involved in the recovery of the cell from heat-induced damage, in cooperation with DnaK, DnaJ and GrpE. Acts before DnaK, in the processing of protein aggregates. Protein binding stimulates the ATPase activity; ATP hydrolysis unfolds the denatured protein aggregates, which probably helps expose new hydrophobic binding sites on the surface of ClpB-bound aggregates, contributing to the solubilization and refolding of denatured protein aggregates by DnaK. This chain is Chaperone protein ClpB 2 (clpB2), found in Nostoc sp. (strain PCC 7120 / SAG 25.82 / UTEX 2576).